A 400-amino-acid polypeptide reads, in one-letter code: Phosphoglycerate kinase (400 aa).

Substrate-binding positions include 21 to 23 (DFN), Arg37, 60 to 63 (HLGR), Arg121, and Arg154. ATP contacts are provided by residues Lys204, Glu326, and 355–358 (GGDS).

This sequence belongs to the phosphoglycerate kinase family. Monomer.

It localises to the cytoplasm. The catalysed reaction is (2R)-3-phosphoglycerate + ATP = (2R)-3-phospho-glyceroyl phosphate + ADP. It participates in carbohydrate degradation; glycolysis; pyruvate from D-glyceraldehyde 3-phosphate: step 2/5. The chain is Phosphoglycerate kinase from Chloroflexus aggregans (strain MD-66 / DSM 9485).